We begin with the raw amino-acid sequence, 634 residues long: Probable potassium transport system protein Kup (634 aa).

12 helical membrane passes run 19 to 39 (AIGL…TSPL), 62 to 82 (VLSL…VIFV), 113 to 133 (FVVV…MITP), 150 to 170 (GLEH…FLIQ), 177 to 197 (IGIL…ALGV), 225 to 245 (IGVA…ALYA), 259 to 279 (WFLL…ATIL), 291 to 311 (LLAP…ATVI), 349 to 369 (IYIG…VLGF), 379 to 399 (YGVA…VVIW), 406 to 426 (LWLG…FFAA), and 431 to 451 (VIQG…LMST).

It belongs to the HAK/KUP transporter (TC 2.A.72) family.

Its subcellular location is the cell inner membrane. The catalysed reaction is K(+)(in) + H(+)(in) = K(+)(out) + H(+)(out). Functionally, transport of potassium into the cell. Likely operates as a K(+):H(+) symporter. In Pseudomonas aeruginosa (strain UCBPP-PA14), this protein is Probable potassium transport system protein Kup.